The following is a 227-amino-acid chain: Prolactin-5A1 (227 aa).

The first 27 residues, 1–27 (MQIQPHPSGALLLLLLSNLLMWENVAS), serve as a signal peptide directing secretion. A glycan (N-linked (GlcNAc...) asparagine) is linked at N47. Cysteines 85 and 204 form a disulfide.

This sequence belongs to the somatotropin/prolactin family. In terms of tissue distribution, expressed specifically in placenta. Highly expressed in invasive trophoblast cells lining the central placental vessel.

It localises to the secreted. The chain is Prolactin-5A1 (Prl5a1) from Rattus norvegicus (Rat).